Consider the following 537-residue polypeptide: Multidrug resistance protein Stp (537 aa).

Transmembrane regions (helical) follow at residues 6–26 (LLTL…ALIV), 46–66 (WVVA…ATLA), 77–97 (IGVS…SIAV), 104–124 (AQGL…SAAF), 136–156 (IWTA…GLLV), 163–183 (SIFY…LCYV), 200–220 (LLFI…PQIG), 223–243 (SVQT…FVWL), 262–282 (YALA…MLLL), 300–320 (LMIL…GHLV), 327–347 (VPIL…IFSE), 352–372 (ALVL…LTPI), 397–417 (AIGS…WLSA), and 478–498 (VALL…WRWF).

The protein belongs to the major facilitator superfamily. EmrB family.

The protein resides in the cell membrane. Functionally, contributes to spectinomycin and tetracycline resistance. This chain is Multidrug resistance protein Stp (stp), found in Mycobacterium tuberculosis (strain ATCC 25618 / H37Rv).